Here is a 276-residue protein sequence, read N- to C-terminus: 3-methyl-2-oxobutanoate hydroxymethyltransferase (276 aa).

Residues Asp44 and Asp83 each contribute to the Mg(2+) site. Residues 44–45 (DS), Asp83, and Lys112 contribute to the 3-methyl-2-oxobutanoate site. Mg(2+) is bound at residue Glu114. The active-site Proton acceptor is Glu180. Residues 256-276 (PTEAQSSRMKPDELSRALNAE) form a disordered region.

Belongs to the PanB family. Homodecamer; pentamer of dimers. It depends on Mg(2+) as a cofactor.

It is found in the cytoplasm. It carries out the reaction 3-methyl-2-oxobutanoate + (6R)-5,10-methylene-5,6,7,8-tetrahydrofolate + H2O = 2-dehydropantoate + (6S)-5,6,7,8-tetrahydrofolate. It functions in the pathway cofactor biosynthesis; (R)-pantothenate biosynthesis; (R)-pantoate from 3-methyl-2-oxobutanoate: step 1/2. In terms of biological role, catalyzes the reversible reaction in which hydroxymethyl group from 5,10-methylenetetrahydrofolate is transferred onto alpha-ketoisovalerate to form ketopantoate. The protein is 3-methyl-2-oxobutanoate hydroxymethyltransferase of Gluconacetobacter diazotrophicus (strain ATCC 49037 / DSM 5601 / CCUG 37298 / CIP 103539 / LMG 7603 / PAl5).